The following is a 156-amino-acid chain: Cytochrome c-type biogenesis protein CcmE 1 (156 aa).

Residues 1 to 8 (MNATRRQR) lie on the Cytoplasmic side of the membrane. A helical; Signal-anchor for type II membrane protein membrane pass occupies residues 9 to 29 (LWWVICVLTAAALAVTLIVFA). At 30–156 (LQRNMSYLFT…ATATPLTAPR (127 aa)) the chain is on the periplasmic side. Residues His-123 and Tyr-127 each coordinate heme. Residues 137 to 156 (AEGHAGKPIPATATPLTAPR) are disordered. A compositionally biased stretch (low complexity) spans 146–156 (PATATPLTAPR).

Belongs to the CcmE/CycJ family.

It is found in the cell inner membrane. In terms of biological role, heme chaperone required for the biogenesis of c-type cytochromes. Transiently binds heme delivered by CcmC and transfers the heme to apo-cytochromes in a process facilitated by CcmF and CcmH. The polypeptide is Cytochrome c-type biogenesis protein CcmE 1 (Xanthomonas euvesicatoria pv. vesicatoria (strain 85-10) (Xanthomonas campestris pv. vesicatoria)).